The chain runs to 360 residues: RNA-binding protein 1 (360 aa).

Positions 6–82 (YKLFVGGIAK…KPVDVRKAIR (77 aa)) constitute an RRM 1 domain. A coiled-coil region spans residues 93–113 (MQFLERKVQQMNGGLREMSSN). Positions 120-197 (KKIFVGGLSS…KRVEVKRAIP (78 aa)) constitute an RRM 2 domain.

Highly expressed in inflorescences and roots. Detected in leaves and seedlings, but not in stems. Expressed in vegetative shoot apex and root meristem, but not in root cap. Detected in flower buds, junction of pedicels, joints of immature siliques and pistil.

Functionally, RNA binding protein. Can also bind in vitro to single-stranded DNA. This is RNA-binding protein 1 (RBP1) from Arabidopsis thaliana (Mouse-ear cress).